A 128-amino-acid polypeptide reads, in one-letter code: Ribosome-binding factor A (128 aa).

It belongs to the RbfA family. Monomer. Binds 30S ribosomal subunits, but not 50S ribosomal subunits or 70S ribosomes.

The protein localises to the cytoplasm. Functionally, one of several proteins that assist in the late maturation steps of the functional core of the 30S ribosomal subunit. Associates with free 30S ribosomal subunits (but not with 30S subunits that are part of 70S ribosomes or polysomes). Required for efficient processing of 16S rRNA. May interact with the 5'-terminal helix region of 16S rRNA. The polypeptide is Ribosome-binding factor A (Herminiimonas arsenicoxydans).